The primary structure comprises 199 residues: Alkyl hydroperoxide reductase C (199 aa).

The 162-residue stretch at 2–163 (VLVTYPAPDF…TLRMIDALHF (162 aa)) folds into the Thioredoxin domain. The active-site Cysteine sulfenic acid (-SOH) intermediate is C50.

Belongs to the peroxiredoxin family. AhpC/Prx1 subfamily. As to quaternary structure, homodimer; disulfide-linked, upon oxidation. 5 homodimers assemble to form a ring-like decamer.

Its subcellular location is the cytoplasm. The enzyme catalyses a hydroperoxide + NADH + H(+) = an alcohol + NAD(+) + H2O. Its function is as follows. Thiol-specific peroxidase that catalyzes the reduction of hydrogen peroxide and organic hydroperoxides to water and alcohols, respectively. Plays a role in cell protection against oxidative stress by detoxifying peroxides. The polypeptide is Alkyl hydroperoxide reductase C (Buchnera aphidicola subsp. Baizongia pistaciae (strain Bp)).